We begin with the raw amino-acid sequence, 37 residues long: Large ribosomal subunit protein bL36 (37 aa).

The protein belongs to the bacterial ribosomal protein bL36 family.

This Desulforapulum autotrophicum (strain ATCC 43914 / DSM 3382 / VKM B-1955 / HRM2) (Desulfobacterium autotrophicum) protein is Large ribosomal subunit protein bL36.